We begin with the raw amino-acid sequence, 452 residues long: Bifunctional protein GlmU (452 aa).

The segment at 1-232 is pyrophosphorylase; it reads MTGRSCLTIV…EDEVRGINTK (232 aa). UDP-N-acetyl-alpha-D-glucosamine contacts are provided by residues 11–14, Lys25, Gln78, and 83–84; these read LAAG and GT. Asp108 is a binding site for Mg(2+). 4 residues coordinate UDP-N-acetyl-alpha-D-glucosamine: Gly144, Glu158, Asn173, and Asn230. Position 230 (Asn230) interacts with Mg(2+). Residues 233 to 253 are linker; the sequence is AQLAEAEQVMQARLRKEALDA. An N-acetyltransferase region spans residues 254 to 452; sequence GVTMVAPDTV…KLLAKKPKTG (199 aa). UDP-N-acetyl-alpha-D-glucosamine contacts are provided by Arg319 and Lys337. His349 serves as the catalytic Proton acceptor. Residues Tyr352 and Asn363 each coordinate UDP-N-acetyl-alpha-D-glucosamine. Acetyl-CoA contacts are provided by residues Ala366, 372–373, Ser391, Ser409, and Arg426; that span reads NY.

The protein in the N-terminal section; belongs to the N-acetylglucosamine-1-phosphate uridyltransferase family. It in the C-terminal section; belongs to the transferase hexapeptide repeat family. In terms of assembly, homotrimer. Mg(2+) is required as a cofactor.

The protein resides in the cytoplasm. It catalyses the reaction alpha-D-glucosamine 1-phosphate + acetyl-CoA = N-acetyl-alpha-D-glucosamine 1-phosphate + CoA + H(+). It carries out the reaction N-acetyl-alpha-D-glucosamine 1-phosphate + UTP + H(+) = UDP-N-acetyl-alpha-D-glucosamine + diphosphate. It functions in the pathway nucleotide-sugar biosynthesis; UDP-N-acetyl-alpha-D-glucosamine biosynthesis; N-acetyl-alpha-D-glucosamine 1-phosphate from alpha-D-glucosamine 6-phosphate (route II): step 2/2. The protein operates within nucleotide-sugar biosynthesis; UDP-N-acetyl-alpha-D-glucosamine biosynthesis; UDP-N-acetyl-alpha-D-glucosamine from N-acetyl-alpha-D-glucosamine 1-phosphate: step 1/1. It participates in bacterial outer membrane biogenesis; LPS lipid A biosynthesis. Its function is as follows. Catalyzes the last two sequential reactions in the de novo biosynthetic pathway for UDP-N-acetylglucosamine (UDP-GlcNAc). The C-terminal domain catalyzes the transfer of acetyl group from acetyl coenzyme A to glucosamine-1-phosphate (GlcN-1-P) to produce N-acetylglucosamine-1-phosphate (GlcNAc-1-P), which is converted into UDP-GlcNAc by the transfer of uridine 5-monophosphate (from uridine 5-triphosphate), a reaction catalyzed by the N-terminal domain. The polypeptide is Bifunctional protein GlmU (Nitrobacter hamburgensis (strain DSM 10229 / NCIMB 13809 / X14)).